The sequence spans 1177 residues: Putative ATP-dependent RNA helicase TDRD12 (1177 aa).

Residues 56 to 118 (TLEEGQVCVV…RVVVESFMQL (63 aa)) form the Tudor 1 domain. A Helicase ATP-binding domain is found at 447 to 635 (WPPIARGCDV…KEFMNDPYIV (189 aa)). 460 to 467 (SHCESNPL) serves as a coordination point for ATP. Positions 574-577 (DEVE) match the DEAH box motif. Residues 900–999 (IVDKHMDLYA…HTLPPQAVEF (100 aa)) enclose the Tudor 2 domain. The disordered stretch occupies residues 1098–1177 (EESLSQTPPR…VFKRWLSSNR (80 aa)). The span at 1100 to 1115 (SLSQTPPRVTGTSPAQ) shows a compositional bias: polar residues.

In terms of assembly, component of a mRNP complex containing PIWIL2, TDRD1 and piRNAs. Component of the PET complex, at least composed of EXD1, PIWIL2, TDRD12 and piRNAs.

The catalysed reaction is ATP + H2O = ADP + phosphate + H(+). Functionally, probable ATP-binding RNA helicase required during spermatogenesis to repress transposable elements and preventing their mobilization, which is essential for the germline integrity. Acts via the piRNA metabolic process, which mediates the repression of transposable elements during meiosis by forming complexes composed of piRNAs and Piwi proteins and governs the methylation and subsequent repression of transposons. Involved in the secondary piRNAs metabolic process. Acts via the PET complex, a multiprotein complex required during the secondary piRNAs metabolic process for the PIWIL2 slicing-triggered loading of PIWIL4 piRNAs. This chain is Putative ATP-dependent RNA helicase TDRD12 (TDRD12), found in Homo sapiens (Human).